A 729-amino-acid chain; its full sequence is 1,4-alpha-glucan branching enzyme GlgB (729 aa).

The Nucleophile role is filled by aspartate 405. The active-site Proton donor is glutamate 458.

The protein belongs to the glycosyl hydrolase 13 family. GlgB subfamily. In terms of assembly, monomer.

It catalyses the reaction Transfers a segment of a (1-&gt;4)-alpha-D-glucan chain to a primary hydroxy group in a similar glucan chain.. It functions in the pathway glycan biosynthesis; glycogen biosynthesis. Functionally, catalyzes the formation of the alpha-1,6-glucosidic linkages in glycogen by scission of a 1,4-alpha-linked oligosaccharide from growing alpha-1,4-glucan chains and the subsequent attachment of the oligosaccharide to the alpha-1,6 position. The sequence is that of 1,4-alpha-glucan branching enzyme GlgB from Mannheimia succiniciproducens (strain KCTC 0769BP / MBEL55E).